The primary structure comprises 211 residues: 3-demethoxyubiquinol 3-hydroxylase (211 aa).

Positions 60, 90, 93, 142, 174, and 177 each coordinate Fe cation.

This sequence belongs to the COQ7 family. The cofactor is Fe cation.

It is found in the cell membrane. The enzyme catalyses a 5-methoxy-2-methyl-3-(all-trans-polyprenyl)benzene-1,4-diol + AH2 + O2 = a 3-demethylubiquinol + A + H2O. It functions in the pathway cofactor biosynthesis; ubiquinone biosynthesis. Its function is as follows. Catalyzes the hydroxylation of 2-nonaprenyl-3-methyl-6-methoxy-1,4-benzoquinol during ubiquinone biosynthesis. The polypeptide is 3-demethoxyubiquinol 3-hydroxylase (Acinetobacter baumannii (strain AB307-0294)).